The chain runs to 505 residues: Calcium/calmodulin-dependent protein kinase kinase 1 (505 aa).

The tract at residues 26 to 61 (THLEEADGGPEPTRNGVDPPPRARAASVIPGSTSRL) is disordered. 2 positions are modified to phosphoserine: Ser67 and Ser74. The residue at position 78 (Arg78) is an Asymmetric dimethylarginine. Residue Ser100 is modified to Phosphoserine. Position 108 is a phosphothreonine (Thr108). The region spanning 128–409 (YKLQSEIGKG…VPDIKLHPWV (282 aa)) is the Protein kinase domain. ATP-binding positions include 134–142 (IGKGAYGVV) and Lys157. The interval 167–189 (QYGFPRRPPPRGSQAAQGGPAKQ) is RP domain. Catalysis depends on Asp275, which acts as the Proton acceptor. Positions 435–440 (KNSVRL) are autoinhibitory domain. Residues 438-463 (VRLIPSWTTVILVKSMLRKRSFGNPF) are calmodulin-binding. Phosphoserine is present on residues Ser458, Ser475, and Ser492. Residues 460-505 (GNPFEPQARREERSMSAPGNLLVKEGFGEGGKSPELPGVQEDEAAS) form a disordered region.

The protein belongs to the protein kinase superfamily. Ser/Thr protein kinase family. Interacts with CAMK4 and calmodulin. Appears to be autophosphorylated in a Ca(2+)/calmodulin-dependent manner. Phosphorylated at multiple sites by PRCAKA/PKA. Phosphorylation of Ser-458 is blocked upon binding to Ca(2+)/calmodulin. In vitro, phosphorylated by CAMK1 and CAMK4.

It is found in the cytoplasm. Its subcellular location is the nucleus. The enzyme catalyses L-seryl-[protein] + ATP = O-phospho-L-seryl-[protein] + ADP + H(+). It carries out the reaction L-threonyl-[protein] + ATP = O-phospho-L-threonyl-[protein] + ADP + H(+). Activated by Ca(2+)/calmodulin. Binding of calmodulin may relieve intrasteric autoinhibition. Partially inhibited upon phosphorylation by PRCAKA/PKA. May be regulated through phosphorylation by CAMK1 and CAMK4. Its function is as follows. Calcium/calmodulin-dependent protein kinase that belongs to a proposed calcium-triggered signaling cascade involved in a number of cellular processes. Phosphorylates CAMK1, CAMK1D, CAMK1G and CAMK4. Involved in regulating cell apoptosis. Promotes cell survival by phosphorylating AKT1/PKB that inhibits pro-apoptotic BAD/Bcl2-antagonist of cell death. The sequence is that of Calcium/calmodulin-dependent protein kinase kinase 1 (CAMKK1) from Homo sapiens (Human).